A 323-amino-acid chain; its full sequence is Methionyl-tRNA formyltransferase (323 aa).

Serine 115 to proline 118 lines the (6S)-5,6,7,8-tetrahydrofolate pocket.

This sequence belongs to the Fmt family.

The catalysed reaction is L-methionyl-tRNA(fMet) + (6R)-10-formyltetrahydrofolate = N-formyl-L-methionyl-tRNA(fMet) + (6S)-5,6,7,8-tetrahydrofolate + H(+). Attaches a formyl group to the free amino group of methionyl-tRNA(fMet). The formyl group appears to play a dual role in the initiator identity of N-formylmethionyl-tRNA by promoting its recognition by IF2 and preventing the misappropriation of this tRNA by the elongation apparatus. This is Methionyl-tRNA formyltransferase from Blochmanniella floridana.